The primary structure comprises 86 residues: uncharacterized protein (86 aa).

To B.subtilis spore coat protein C.

This is an uncharacterized protein from Bacillus subtilis (strain 168).